Consider the following 178-residue polypeptide: Cell division protein ZapC (178 aa).

The protein belongs to the ZapC family. Interacts directly with FtsZ.

It localises to the cytoplasm. In terms of biological role, contributes to the efficiency of the cell division process by stabilizing the polymeric form of the cell division protein FtsZ. Acts by promoting interactions between FtsZ protofilaments and suppressing the GTPase activity of FtsZ. The sequence is that of Cell division protein ZapC from Aeromonas hydrophila subsp. hydrophila (strain ATCC 7966 / DSM 30187 / BCRC 13018 / CCUG 14551 / JCM 1027 / KCTC 2358 / NCIMB 9240 / NCTC 8049).